Here is a 538-residue protein sequence, read N- to C-terminus: Cytosolic Fe-S cluster assembly factor NAR1 homolog (538 aa).

The [4Fe-4S] cluster site is built by Cys19, Cys64, Cys67, Cys70, Cys218, Cys273, Cys453, and Cys457.

Belongs to the NARF family.

The protein localises to the cytoplasm. It is found in the nucleus. Component of the cytosolic Fe/S protein assembly machinery. Required for maturation of extramitochondrial Fe/S proteins. May play a role in the transfer of pre-assembled Fe/S clusters to target apoproteins. This Schizosaccharomyces pombe (strain 972 / ATCC 24843) (Fission yeast) protein is Cytosolic Fe-S cluster assembly factor NAR1 homolog.